Here is a 147-residue protein sequence, read N- to C-terminus: UPF0260 protein Ent638_2368 (147 aa).

This sequence belongs to the UPF0260 family.

The polypeptide is UPF0260 protein Ent638_2368 (Enterobacter sp. (strain 638)).